The following is a 457-amino-acid chain: ATP-dependent protease ATPase subunit HslU (457 aa).

Residues I18 and 60 to 65 each bind ATP; that span reads GVGKTE. The tract at residues 142–171 is disordered; it reads KQPGMGFFNPAAPEEQEEQPSADQSSTREK. Residues D269, E335, and R407 each coordinate ATP.

The protein belongs to the ClpX chaperone family. HslU subfamily. As to quaternary structure, a double ring-shaped homohexamer of HslV is capped on each side by a ring-shaped HslU homohexamer. The assembly of the HslU/HslV complex is dependent on binding of ATP.

Its subcellular location is the cytoplasm. In terms of biological role, ATPase subunit of a proteasome-like degradation complex; this subunit has chaperone activity. The binding of ATP and its subsequent hydrolysis by HslU are essential for unfolding of protein substrates subsequently hydrolyzed by HslV. HslU recognizes the N-terminal part of its protein substrates and unfolds these before they are guided to HslV for hydrolysis. In Maridesulfovibrio salexigens (strain ATCC 14822 / DSM 2638 / NCIMB 8403 / VKM B-1763) (Desulfovibrio salexigens), this protein is ATP-dependent protease ATPase subunit HslU.